The following is a 429-amino-acid chain: MNHSRSHALFSQAQNLMPGGVNSPVRAFKSVGGEPFFVARADGAYLFDVDGNRYIDYVGSWGPMIAGHNHPAVREAVERAIRDGLSFGAPCEAEVTMAETITRLVPSCEMVRMVNSGTEATLSAIRLARGATGRNRIVKFEGCYHGHGDSFLVKAGSGMLTLGVPTSPGVPAGLSELTATLSFNDFEGATALFDEIGAEVAAVIIEPVVGNANCIPPQAGYLQHLRTLCTRHGALLIFDEVMTGFRVALGGAQAHYGVTPDLTTFGKIIGGGMPVGAYGGGRDLMEQISPAGPIYQAGTLSGNPVAMAAGLAMLQLVQEPGFHARLSETTSLLCEGLEDAARAAGVAVTTNQVGGMFGLFFTDQIVENYAQATACDVTTFNRFFHAMLQQGVYLAPSAYEAGFVSSAHDEAVIEATLAAAREAFADVMR.

At Lys267 the chain carries N6-(pyridoxal phosphate)lysine.

Belongs to the class-III pyridoxal-phosphate-dependent aminotransferase family. HemL subfamily. As to quaternary structure, homodimer. It depends on pyridoxal 5'-phosphate as a cofactor.

The protein localises to the cytoplasm. It catalyses the reaction (S)-4-amino-5-oxopentanoate = 5-aminolevulinate. The protein operates within porphyrin-containing compound metabolism; protoporphyrin-IX biosynthesis; 5-aminolevulinate from L-glutamyl-tRNA(Glu): step 2/2. In Xanthomonas campestris pv. campestris (strain 8004), this protein is Glutamate-1-semialdehyde 2,1-aminomutase.